The chain runs to 73 residues: Antimicrobial peptide TsAP-2 (73 aa).

Residues 1–22 form the signal peptide; it reads MQIKHLITIFFLVLIVADHCHA. K39 bears the Lysine amide mark. Positions 45–73 are excised as a propeptide; it reads EITSQIEQYRNLQKREAELENLLANLPVY.

It belongs to the non-disulfide-bridged peptide (NDBP) superfamily. Short antimicrobial peptide (group 4) family. As to expression, expressed by the venom gland.

It is found in the secreted. Antimicrobial peptide. Has a high antibacterial activity against the Gram-positive bacterium S.aureus (MIC=5-17.30 uM), the methicillin-resistant S.aureus (MRSA) (MIC=17.30 uM), and E.faecalis (MIC=69.23 uM). Has antifungal activity against Candida spp. and one Cryptococcus neoformans strains with MICs values ranging from 6.25 to 100 uM. Also shows an inhibitory activity on C.albicans biofilms at high concentrations. Has a moderate hemolytic potency (18% at 20 uM). Also inhibits the growth of the five human cancer cell lines tested (the squamous carcinoma cell line H157 (IC(50)=4.1 uM), the lung adenocarcinoma cell line H838 (11.0 uM), the breast carcinoma cell line MCF-7 (6.4 uM), the androgen-independent prostate adenocarcinoma cell line PC3 (13.3 uM) and the glioblastoma cell line U251-MG (15.4 uM)). In the model of polymicrobial sepsis, it exhibits an antibiotic effect, reducing the levels of microorganisms in the infectious focus and the inflammatory responses in the lung and cecum of septic animals. The chain is Antimicrobial peptide TsAP-2 from Tityus serrulatus (Brazilian scorpion).